The chain runs to 172 residues: Bifunctional protein PyrR (172 aa).

The PRPP-binding signature appears at 90-102 (LVLVDDVLMSGRT).

Belongs to the purine/pyrimidine phosphoribosyltransferase family. PyrR subfamily.

The enzyme catalyses UMP + diphosphate = 5-phospho-alpha-D-ribose 1-diphosphate + uracil. In terms of biological role, regulates the transcription of the pyrimidine nucleotide (pyr) operon in response to exogenous pyrimidines. Also displays a weak uracil phosphoribosyltransferase activity which is not physiologically significant. This Pseudomonas putida (strain GB-1) protein is Bifunctional protein PyrR.